Consider the following 551-residue polypeptide: Interferon-induced, double-stranded RNA-activated protein kinase (551 aa).

Ala-2 carries the post-translational modification N-acetylalanine. Residues 2-180 form a (Microbial infection) Interaction with HCV NS5A region; that stretch reads AGDLSAGFFM…SVKSDYLSSG (179 aa). Residues 9–77 form the DRBM 1 domain; sequence FFMEELNTYR…AKLAVEILNK (69 aa). Residue Lys-69 forms a Glycyl lysine isopeptide (Lys-Gly) (interchain with G-Cter in ISG15) linkage. At Ser-83 the chain carries Phosphoserine. Phosphothreonine; by autocatalysis is present on residues Thr-88, Thr-89, and Thr-90. The 68-residue stretch at 100-167 folds into the DRBM 2 domain; the sequence is NYIGLINRIA…AKLAYLQILS (68 aa). Residue Tyr-101 is modified to Phosphotyrosine; by autocatalysis. Lys-159 participates in a covalent cross-link: Glycyl lysine isopeptide (Lys-Gly) (interchain with G-Cter in ISG15). Tyr-162 is modified (phosphotyrosine; by autocatalysis). Polar residues predominate over residues 202 to 215; sequence SSSEGDFSADTSEI. Residues 202–222 form a disordered region; sequence SSSEGDFSADTSEINSNSDSL. Position 242 is a phosphoserine; by autocatalysis (Ser-242). Residues Thr-255 and Thr-258 each carry the phosphothreonine; by autocatalysis modification. The tract at residues 266–362 is dimerization; that stretch reads DFKEIELIGS…NSSRSKTKCL (97 aa). Positions 266–551 are interaction with TRAF5; it reads DFKEIELIGS…SPEKNERHTC (286 aa). The region spanning 267–538 is the Protein kinase domain; that stretch reads FKEIELIGSG…TSEILRTLTV (272 aa). An ATP-binding site is contributed by 273-281; sequence IGSGGFGQV. Residue Tyr-293 is modified to Phosphotyrosine; by autocatalysis. Lys-296 serves as a coordination point for ATP. 2 tandem repeats follow at residues 331–343 and 345–357. The segment at 331–357 is 2 X 13 AA approximate repeats; that stretch reads DYDPETSDDSLESSDYDPENSKNSSRS. Positions 379–496 are interaction with EIF2S1/EIF-2ALPHA; the sequence is EKRRGEKLDK…TAFETSKFFT (118 aa). The active-site Proton acceptor is Asp-414. Asp-432 is a binding site for Mg(2+). Residues Thr-446 and Thr-451 each carry the phosphothreonine; by autocatalysis modification. Ser-456 and Ser-542 each carry phosphoserine.

The protein belongs to the protein kinase superfamily. Ser/Thr protein kinase family. GCN2 subfamily. In terms of assembly, homodimer. Interacts with STRBP. Interacts with DNAJC3. Forms a complex with FANCA, FANCC, FANCG and HSP70. Interacts with ADAR/ADAR1. Interacts with IRS1. The inactive form interacts with NCK1 and GSN. Interacts (via the kinase catalytic domain) with STAT3 (via SH2 domain), TRAF2 (C-terminus), TRAF5 (C-terminus) and TRAF6 (C-terminus). Interacts with MAP2K6, IKBKB/IKKB, NPM1, TARBP2, NLRP1, NLRP3, NLRC4 and AIM2. Interacts (via DRBM 1 domain) with DUS2L (via DRBM domain). Interacts with DHX9 (via N-terminus) and this interaction is dependent upon activation of the kinase. Interacts with EIF2S1/EIF-2ALPHA; this interaction induces a conformational change in EIF2S1 and its phosphorylation by EIF2AK2. (Microbial infection) Interacts with human cytomegalovirus (HCMV) TRS1; this interaction retains EIF2AK2 to the nucleus and prevents its activation. As to quaternary structure, (Microbial infection) Interacts with vaccinia virus protein K3 (K3L); this interaction inhibits EIF2AK2. In terms of assembly, (Microbial infection) Interacts with human herpes simplex virus 1 (HHV-1) protein US11 in an RNA-dependent manner. (Microbial infection) The inactive form interacts with Toscana virus (TOS) NSS. As to quaternary structure, (Microbial infection) Interacts with herpes virus 8 protein v-IRF2; this interaction inhibits EIF2AK2 activation. In terms of assembly, (Microbial infection) Interacts with vaccinia protein E3. (Microbial infection) Interacts (via N-terminus) with Hepatitis C virus (HCV) mature core protein (via N-terminus); this interaction induces the autophosphorylation of EIF2AK2. As to quaternary structure, (Microbial infection) Interacts with Hepatitis C virus (HCV) non-structural protein 5A (NS5A); this interaction leads to disruption of EIF2AK2 dimerization by NS5A. In terms of assembly, (Microbial infection) Interacts with Hepatitis C virus (HCV) envelope glycoprotein E2; this interaction inhibits EIF2AK2 and blocks its inhibitory effect on protein synthesis and cell growth. (Microbial infection) Interacts with human respiratory syncytial virus (HRSV) nucleoprotein; this interaction inhibits EIF2AK2 phosphorylation of EIF2S1 and blocks EIF2AK2-mediated translation shutoff. As to quaternary structure, (Microbial infection) Interacts with human herpesvirus 8 protein MTA/ORF57; this interaction inhibits stress granule formation. Mg(2+) serves as cofactor. In terms of processing, autophosphorylated on several Ser, Thr and Tyr residues. Autophosphorylation of Thr-451 is dependent on Thr-446 and is stimulated by dsRNA binding and dimerization. Autophosphorylation apparently leads to the activation of the kinase. Tyrosine autophosphorylation is essential for efficient dsRNA-binding, dimerization, and kinase activation. As to expression, highly expressed in thymus, spleen and bone marrow compared to non-hematopoietic tissues such as small intestine, liver, or kidney tissues. Colocalizes with GSK3B and TAU in the Alzheimer disease (AD) brain. Elevated levels seen in breast and colon carcinomas, and which correlates with tumor progression and invasiveness or risk of progression.

The protein resides in the cytoplasm. It is found in the nucleus. Its subcellular location is the perinuclear region. It carries out the reaction L-seryl-[protein] + ATP = O-phospho-L-seryl-[protein] + ADP + H(+). The catalysed reaction is L-threonyl-[protein] + ATP = O-phospho-L-threonyl-[protein] + ADP + H(+). The enzyme catalyses L-tyrosyl-[protein] + ATP = O-phospho-L-tyrosyl-[protein] + ADP + H(+). With respect to regulation, initially produced in an inactive form and is activated by binding to viral dsRNA, which causes dimerization and autophosphorylation in the activation loop and stimulation of function. ISGylation can activate it in the absence of viral infection. Can also be activated by heparin, pro-inflammatory stimuli, growth factors, cytokines, oxidative stress and the cellular protein PRKRA. Activity is markedly stimulated by manganese ions. Activation is blocked by the viral components HIV-1 Tat protein and large amounts of HIV-1 trans-activation response (TAR) RNA element as well as by the cellular proteins TARBP2, DUS2L, NPM1, NCK1 and ADAR. Down-regulated by Toscana virus (TOS) and Rift valley fever virus (RVFV) NSS which promote its proteasomal degradation. Inhibited by vaccinia virus protein E3, probably via dsRNA sequestering. Functionally, IFN-induced dsRNA-dependent serine/threonine-protein kinase that phosphorylates the alpha subunit of eukaryotic translation initiation factor 2 (EIF2S1/eIF-2-alpha) and plays a key role in the innate immune response to viral infection. Inhibits viral replication via the integrated stress response (ISR): EIF2S1/eIF-2-alpha phosphorylation in response to viral infection converts EIF2S1/eIF-2-alpha in a global protein synthesis inhibitor, resulting to a shutdown of cellular and viral protein synthesis, while concomitantly initiating the preferential translation of ISR-specific mRNAs, such as the transcriptional activator ATF4. Exerts its antiviral activity on a wide range of DNA and RNA viruses including hepatitis C virus (HCV), hepatitis B virus (HBV), measles virus (MV) and herpes simplex virus 1 (HHV-1). Also involved in the regulation of signal transduction, apoptosis, cell proliferation and differentiation: phosphorylates other substrates including p53/TP53, PPP2R5A, DHX9, ILF3, IRS1 and the HHV-1 viral protein US11. In addition to serine/threonine-protein kinase activity, also has tyrosine-protein kinase activity and phosphorylates CDK1 at 'Tyr-4' upon DNA damage, facilitating its ubiquitination and proteasomal degradation. Either as an adapter protein and/or via its kinase activity, can regulate various signaling pathways (p38 MAP kinase, NF-kappa-B and insulin signaling pathways) and transcription factors (JUN, STAT1, STAT3, IRF1, ATF3) involved in the expression of genes encoding pro-inflammatory cytokines and IFNs. Activates the NF-kappa-B pathway via interaction with IKBKB and TRAF family of proteins and activates the p38 MAP kinase pathway via interaction with MAP2K6. Can act as both a positive and negative regulator of the insulin signaling pathway (ISP). Negatively regulates ISP by inducing the inhibitory phosphorylation of insulin receptor substrate 1 (IRS1) at 'Ser-312' and positively regulates ISP via phosphorylation of PPP2R5A which activates FOXO1, which in turn up-regulates the expression of insulin receptor substrate 2 (IRS2). Can regulate NLRP3 inflammasome assembly and the activation of NLRP3, NLRP1, AIM2 and NLRC4 inflammasomes. Plays a role in the regulation of the cytoskeleton by binding to gelsolin (GSN), sequestering the protein in an inactive conformation away from actin. This Homo sapiens (Human) protein is Interferon-induced, double-stranded RNA-activated protein kinase (EIF2AK2).